The sequence spans 597 residues: Arginine--tRNA ligase (597 aa).

Positions 125–135 match the 'HIGH' region motif; the sequence is PNTNKPLHLGH.

Belongs to the class-I aminoacyl-tRNA synthetase family. Monomer.

The protein localises to the cytoplasm. It catalyses the reaction tRNA(Arg) + L-arginine + ATP = L-arginyl-tRNA(Arg) + AMP + diphosphate. In Porphyromonas gingivalis (strain ATCC 33277 / DSM 20709 / CIP 103683 / JCM 12257 / NCTC 11834 / 2561), this protein is Arginine--tRNA ligase.